The primary structure comprises 193 residues: MIGRIAGILLEKNPPHLLVDCNGVGYEIDVPMSTFYNLPQNGERVVLLTQQIVREDANLLYGFLTPQERTTFRELLKITGIGARMALAVLSGMSVQELAQAVTMQDAARLTRLPGIGKKTAERLLLELKGKLGADLGELAGAASPSDHATDILNALLALGYSEKEGLAAIKNVPAGTGVSEGIKLALKALSKV.

A domain I region spans residues 1-64 (MIGRIAGILL…EDANLLYGFL (64 aa)). Residues 65–139 (TPQERTTFRE…GKLGADLGEL (75 aa)) form a domain II region. Residues 139-143 (LAGAA) form a flexible linker region. Residues 144–193 (SPSDHATDILNALLALGYSEKEGLAAIKNVPAGTGVSEGIKLALKALSKV) form a domain III region.

Belongs to the RuvA family. Homotetramer. Forms an RuvA(8)-RuvB(12)-Holliday junction (HJ) complex. HJ DNA is sandwiched between 2 RuvA tetramers; dsDNA enters through RuvA and exits via RuvB. An RuvB hexamer assembles on each DNA strand where it exits the tetramer. Each RuvB hexamer is contacted by two RuvA subunits (via domain III) on 2 adjacent RuvB subunits; this complex drives branch migration. In the full resolvosome a probable DNA-RuvA(4)-RuvB(12)-RuvC(2) complex forms which resolves the HJ.

The protein resides in the cytoplasm. Its function is as follows. The RuvA-RuvB-RuvC complex processes Holliday junction (HJ) DNA during genetic recombination and DNA repair, while the RuvA-RuvB complex plays an important role in the rescue of blocked DNA replication forks via replication fork reversal (RFR). RuvA specifically binds to HJ cruciform DNA, conferring on it an open structure. The RuvB hexamer acts as an ATP-dependent pump, pulling dsDNA into and through the RuvAB complex. HJ branch migration allows RuvC to scan DNA until it finds its consensus sequence, where it cleaves and resolves the cruciform DNA. The protein is Holliday junction branch migration complex subunit RuvA of Burkholderia lata (strain ATCC 17760 / DSM 23089 / LMG 22485 / NCIMB 9086 / R18194 / 383).